Here is a 115-residue protein sequence, read N- to C-terminus: MARAAASQLVLVALVAAMLLVAADAAISCGQVSSALSPCISYARGNGAKPPAACCSGVKRLAGAAQSTADKQAACKCIKSAAGGLNAGKAAGIPSMCGVSVPYAISASVDCSKIR.

The first 25 residues, 1 to 25, serve as a signal peptide directing secretion; it reads MARAAASQLVLVALVAAMLLVAADA. Cystine bridges form between Cys29–Cys77, Cys39–Cys54, Cys55–Cys97, and Cys75–Cys111.

It belongs to the plant LTP family.

Its function is as follows. Plant non-specific lipid-transfer proteins transfer phospholipids as well as galactolipids across membranes. May play a role in wax or cutin deposition in the cell walls of expanding epidermal cells and certain secretory tissues. In Hordeum vulgare (Barley), this protein is Non-specific lipid-transfer protein 4.1 (LTP4.1).